Consider the following 259-residue polypeptide: Ribonuclease HII (259 aa).

The RNase H type-2 domain occupies 70 to 258; sequence TLIAGIDEVG…VKSLVLGKKE (189 aa). 3 residues coordinate a divalent metal cation: D76, E77, and D168.

This sequence belongs to the RNase HII family. Mn(2+) is required as a cofactor. Mg(2+) serves as cofactor.

The protein resides in the cytoplasm. It carries out the reaction Endonucleolytic cleavage to 5'-phosphomonoester.. Functionally, endonuclease that specifically degrades the RNA of RNA-DNA hybrids. This chain is Ribonuclease HII, found in Streptococcus pneumoniae (strain Taiwan19F-14).